We begin with the raw amino-acid sequence, 239 residues long: Leucine rich adaptor protein 1 (239 aa).

LRR repeat units follow at residues 55 to 83 (LGDK…LVTL) and 93 to 114 (LLEE…QYSL). The span at 107–118 (LTSSQYSLTGGS) shows a compositional bias: low complexity. Residues 107 to 140 (LTSSQYSLTGGSPERSRRGSWDSLPDTSSTDRLD) form a disordered region. 3 positions are modified to phosphoserine: Ser118, Ser126, and Ser129.

As to quaternary structure, forms a tripartite complex with CDC42BPA/CDC42BPB and MYO18A acting as an adapter connecting both. Its binding to CDC42BPA/CDC42BPB results in their activation by abolition of their negative autoregulation. Interacts with CDC42BPA and CDC42BPB. In terms of processing, phosphorylated.

Its subcellular location is the cytoplasm. Functionally, acts as an activator of the canonical NF-kappa-B pathway and drive the production of pro-inflammatory cytokines. Promotes the antigen (Ag)-presenting and priming function of dendritic cells via the canonical NF-kappa-B pathway. In concert with MYO18A and CDC42BPA/CDC42BPB, is involved in modulating lamellar actomyosin retrograde flow that is crucial to cell protrusion and migration. Activates CDC42BPA/CDC42BPB and targets it to actomyosin through its interaction with MYO18A, leading to MYL9/MLC2 phosphorylation and MYH9/MYH10-dependent actomyosin assembly in the lamella. The sequence is that of Leucine rich adaptor protein 1 (Lurap1) from Rattus norvegicus (Rat).